Reading from the N-terminus, the 384-residue chain is DNA dC-&gt;dU-editing enzyme APOBEC-3G (384 aa).

Residues 1 to 60 form an essential for cytoplasmic localization region; it reads MKPHFRNTVERMYRDTFSYNFYNRPILSRRNTVWLCYEVKTKGPSRPPLDAKIFRGQVYS. Residues 29 to 138 enclose the CMP/dCMP-type deaminase 1 domain; the sequence is RRNTVWLCYE…PDYQEALRSL (110 aa). Thr32 is modified (phosphothreonine; by PKA). Residues Lys42, Lys52, and Lys63 each participate in a (Microbial infection) Glycyl lysine isopeptide (Lys-Gly) (interchain with G-Cter in ubiquitin) cross-link. 3 residues coordinate Zn(2+): His65, Cys97, and Cys100. (Microbial infection) Glycyl lysine isopeptide (Lys-Gly) (interchain with G-Cter in ubiquitin) cross-links involve residues Lys150 and Lys163. A necessary for homooligomerization region spans residues 209-336; the sequence is EPWVRGRHET…TLAEAGAKIS (128 aa). The segment at 213–215 is interaction with DNA; sequence RGR. Residues 214–328 form the CMP/dCMP-type deaminase 2 domain; sequence GRHETYLCYE…GRCQEGLRTL (115 aa). The residue at position 218 (Thr218) is a Phosphothreonine; by PKA and CAMK2. Lys249 is covalently cross-linked ((Microbial infection) Glycyl lysine isopeptide (Lys-Gly) (interchain with G-Cter in ubiquitin)). Position 257 (His257) interacts with Zn(2+). Residue Glu259 is the Proton donor of the active site. A (Microbial infection) Glycyl lysine isopeptide (Lys-Gly) (interchain with G-Cter in ubiquitin) cross-link involves residue Lys270. Zn(2+) contacts are provided by Cys288 and Cys291. Residues Lys297, Lys301, and Lys303 each participate in a (Microbial infection) Glycyl lysine isopeptide (Lys-Gly) (interchain with G-Cter in ubiquitin) cross-link. Residues 313 to 320 form an interaction with DNA region; that stretch reads RIYDDQGR. Lys334 is covalently cross-linked ((Microbial infection) Glycyl lysine isopeptide (Lys-Gly) (interchain with G-Cter in ubiquitin)).

The protein belongs to the cytidine and deoxycytidylate deaminase family. In terms of assembly, homodimer. Homooligomer. Can bind RNA to form ribonucleoprotein complexes of high-molecular-mass (HMM) or low-molecular-mass (LMM). HMM is inactive and heterogeneous in protein composition because of binding nonselectively to cellular RNAs, which in turn are associated with variety of cellular proteins. The LMM form which is enzymatically active has few or no RNAs associated. Its ability to form homooligomer is distinct from its ability to assemble into HMM. Interacts with APOBEC3B, APOBEC3F, MOV10, AGO2, EIF4E, EIF4ENIF1, DCP2 and DDX6 in an RNA-dependent manner. Interacts with AGO1, AGO3 and PKA/PRKACA. (Microbial infection) Interacts with HIV-1 Vif; promoting its ubiquitination by a cullin-5-RING E3 ubiquitin-protein ligase complex (ECS complex) hijacked by the HIV-1 Vif. As to quaternary structure, (Microbial infection) Interacts with HIV-1 reverse transcriptase/ribonuclease H. In terms of assembly, (Microbial infection) Interacts with hepatitis B virus capsid protein. It depends on Zn(2+) as a cofactor. In terms of processing, (Microbial infection) Following infection by HIV-1, ubiquitinated by a cullin-5-RING E3 ubiquitin-protein ligase complex (ECS complex) hijacked by the HIV-1 Vif protein, leading to its degradation. Deubiquitinated by USP49; leading to stabilization. Phosphorylation at Thr-32 reduces its binding to HIV-1 Vif and subsequent ubiquitination and degradation thus promoting its antiviral activity. In terms of tissue distribution, expressed in spleen, testes, ovary and peripheral blood leukocytes and CD4+ lymphocytes. Also expressed in non-permissive peripheral blood mononuclear cells, and several tumor cell lines; no expression detected in permissive lymphoid and non-lymphoid cell lines. Exists only in the LMM form in peripheral blood-derived resting CD4 T-cells and monocytes, both of which are refractory to HIV-1 infection. LMM is converted to a HMM complex when resting CD4 T-cells are activated or when monocytes are induced to differentiate into macrophages. This change correlates with increased susceptibility of these cells to HIV-1 infection.

The protein resides in the cytoplasm. It is found in the nucleus. It localises to the P-body. It catalyses the reaction a 2'-deoxycytidine in single-stranded DNA + H2O + H(+) = a 2'-deoxyuridine in single-stranded DNA + NH4(+). Its activity is regulated as follows. (Microbial infection) Antiviral activity is neutralized by the HIV-1 virion infectivity factor (Vif), that prevents its incorporation into progeny virions by both inhibiting its translation and/or by inducing its ubiquitination and subsequent degradation by the 26S proteasome. Can also be neutralized by simian immunodeficiency virus sooty mangabey monkey virus (SIV-sm) and chimpanzee immunodeficiency virus (SIV-cpz) Vif. Its function is as follows. DNA deaminase (cytidine deaminase) which acts as an inhibitor of retrovirus replication and retrotransposon mobility via deaminase-dependent and -independent mechanisms. Exhibits potent antiviral activity against Vif-deficient HIV-1. After the penetration of retroviral nucleocapsids into target cells of infection and the initiation of reverse transcription, it can induce the conversion of cytosine to uracil in the minus-sense single-strand viral DNA, leading to G-to-A hypermutations in the subsequent plus-strand viral DNA. The resultant detrimental levels of mutations in the proviral genome, along with a deamination-independent mechanism that works prior to the proviral integration, together exert efficient antiretroviral effects in infected target cells. Selectively targets single-stranded DNA and does not deaminate double-stranded DNA or single- or double-stranded RNA. Exhibits antiviral activity also against simian immunodeficiency viruses (SIVs), hepatitis B virus (HBV), equine infectious anemia virus (EIAV), xenotropic MuLV-related virus (XMRV) and simian foamy virus (SFV). May inhibit the mobility of LTR and non-LTR retrotransposons. The polypeptide is DNA dC-&gt;dU-editing enzyme APOBEC-3G (Homo sapiens (Human)).